A 307-amino-acid chain; its full sequence is Probable deoxyhypusine synthase (307 aa).

The active-site Nucleophile is lysine 278.

This sequence belongs to the deoxyhypusine synthase family. Requires NAD(+) as cofactor.

The catalysed reaction is [eIF5A protein]-L-lysine + spermidine = [eIF5A protein]-deoxyhypusine + propane-1,3-diamine. Its pathway is protein modification; eIF5A hypusination. Functionally, catalyzes the NAD-dependent oxidative cleavage of spermidine and the subsequent transfer of the butylamine moiety of spermidine to the epsilon-amino group of a specific lysine residue of the eIF-5A precursor protein to form the intermediate deoxyhypusine residue. This Methanothermobacter thermautotrophicus (strain ATCC 29096 / DSM 1053 / JCM 10044 / NBRC 100330 / Delta H) (Methanobacterium thermoautotrophicum) protein is Probable deoxyhypusine synthase (dys).